Reading from the N-terminus, the 94-residue chain is Potassium channel protein kcv (94 aa).

The helical transmembrane segment at 14 to 34 (FMIHLFILAMFVMIYKFFPGG) threads the bilayer. Asn38 carries an N-linked (GlcNAc...) asparagine; by host glycan. Residues 74-94 (TGAKLCTIAHIVTVFFIVLTL) traverse the membrane as a helical segment.

Belongs to the two pore domain potassium channel (TC 1.A.1.12) family.

It is found in the membrane. Functionally, potassium-selective channel essential in the virus replication cycle. May be involved in preventing multiple infections (Potential). The sequence is that of Potassium channel protein kcv (A250R) from Paramecium bursaria Chlorella virus 1 (PBCV-1).